Here is a 365-residue protein sequence, read N- to C-terminus: UDP-N-acetylglucosamine--N-acetylmuramyl-(pentapeptide) pyrophosphoryl-undecaprenol N-acetylglucosamine transferase (365 aa).

UDP-N-acetyl-alpha-D-glucosamine-binding positions include 17 to 19 (TGG), Asn129, Arg167, Ser194, Ile250, 269 to 274 (ALTVSE), and Gln295.

Belongs to the glycosyltransferase 28 family. MurG subfamily.

Its subcellular location is the cell inner membrane. It catalyses the reaction di-trans,octa-cis-undecaprenyl diphospho-N-acetyl-alpha-D-muramoyl-L-alanyl-D-glutamyl-meso-2,6-diaminopimeloyl-D-alanyl-D-alanine + UDP-N-acetyl-alpha-D-glucosamine = di-trans,octa-cis-undecaprenyl diphospho-[N-acetyl-alpha-D-glucosaminyl-(1-&gt;4)]-N-acetyl-alpha-D-muramoyl-L-alanyl-D-glutamyl-meso-2,6-diaminopimeloyl-D-alanyl-D-alanine + UDP + H(+). It participates in cell wall biogenesis; peptidoglycan biosynthesis. Functionally, cell wall formation. Catalyzes the transfer of a GlcNAc subunit on undecaprenyl-pyrophosphoryl-MurNAc-pentapeptide (lipid intermediate I) to form undecaprenyl-pyrophosphoryl-MurNAc-(pentapeptide)GlcNAc (lipid intermediate II). The sequence is that of UDP-N-acetylglucosamine--N-acetylmuramyl-(pentapeptide) pyrophosphoryl-undecaprenol N-acetylglucosamine transferase from Shewanella piezotolerans (strain WP3 / JCM 13877).